The sequence spans 75 residues: Cytochrome c oxidase assembly factor 5 (75 aa).

In terms of domain architecture, CHCH spans 28-66 (QTDCVLQEGKSPKECLKEGYCKALQVTFFECKRSILDTR). Residues 31 to 42 (CVLQEGKSPKEC) carry the Cx10C motif motif. 2 disulfide bridges follow: Cys31-Cys58 and Cys42-Cys48. The Cx9C motif motif lies at 48–58 (CKALQVTFFEC).

It belongs to the PET191 family.

Involved in an early step of the mitochondrial complex IV assembly process. The sequence is that of Cytochrome c oxidase assembly factor 5 (coa5) from Xenopus tropicalis (Western clawed frog).